The sequence spans 339 residues: Chromo domain-containing protein cec-3 (339 aa).

Residues 1-21 (MSNEGSREESREPEAREGKSD) form a disordered region. One can recognise a Chromo domain in the interval 24-84 (FEVEKILAHK…KLKVTDKTEL (61 aa)). Residues 91-105 (QIKKNKSQKSKKRSK) show a composition bias toward basic residues. Disordered regions lie at residues 91–199 (QIKK…APLS) and 215–272 (EEKA…QRTL). 2 stretches are compositionally biased toward basic and acidic residues: residues 106–117 (TVSDHESNHDSD) and 171–183 (AAME…RNWL). The span at 184 to 193 (DEESSDDEAE) shows a compositional bias: acidic residues. Residues 230–241 (KPREVVIKKDPS) are compositionally biased toward basic and acidic residues. Residues 242–251 (ESPVASASSV) are compositionally biased toward low complexity.

As to expression, expressed in every cell of the embryo (at protein level). In adults, expressed predominantly in the head region and the germline.

It localises to the chromosome. The protein localises to the nucleus. Functionally, specifically recognizes and binds methylated 'Lys-9' of histone H3 (H3K9me), with highest preference for trimethylated 'Lys-9' (H3K9me3) followed by dimethylated 'Lys-9' (H3K9me2) followed by monomethylated 'Lys-9' (H3K9me1). Plays a role in maintaining correct unc-4 expression in the VC motor neurons where unc-4 is expressed in the vulval but not in the non-vulval VC neurons. This chain is Chromo domain-containing protein cec-3 (cec-3), found in Caenorhabditis elegans.